A 298-amino-acid chain; its full sequence is MATKEEHVRKPDWLKIKLNTNEHYTGLKKLMRENRLHTVCEEAKCPNIHECWAVRRTATFMILGSVCTRACRFCAVKTGLPTELDWQEPERVAESVRIMNLKHVVVTAVARDDLKDGGAAVFAETVRAIRRKNPFTTIEVLPSDMGGVYENLKTLMDARPDILNHNIETVRRLTPRVRARATYERSLEFLRRAKELQPDIPTKSSIMIGLGETKEEIIEAMDDLRANHVDILTIGQYLQPTKKHLKVVKYYHPDEFQELKEIALSKGFSHCEAGPLVRSSYHADEQVNEAAKARQLKA.

Positions 40, 45, 51, 67, 71, 74, and 280 each coordinate [4Fe-4S] cluster. A Radical SAM core domain is found at 53 to 269; that stretch reads AVRRTATFMI…KEIALSKGFS (217 aa).

It belongs to the radical SAM superfamily. Lipoyl synthase family. [4Fe-4S] cluster serves as cofactor.

Its subcellular location is the cytoplasm. It catalyses the reaction [[Fe-S] cluster scaffold protein carrying a second [4Fe-4S](2+) cluster] + N(6)-octanoyl-L-lysyl-[protein] + 2 oxidized [2Fe-2S]-[ferredoxin] + 2 S-adenosyl-L-methionine + 4 H(+) = [[Fe-S] cluster scaffold protein] + N(6)-[(R)-dihydrolipoyl]-L-lysyl-[protein] + 4 Fe(3+) + 2 hydrogen sulfide + 2 5'-deoxyadenosine + 2 L-methionine + 2 reduced [2Fe-2S]-[ferredoxin]. Its pathway is protein modification; protein lipoylation via endogenous pathway; protein N(6)-(lipoyl)lysine from octanoyl-[acyl-carrier-protein]. Functionally, catalyzes the radical-mediated insertion of two sulfur atoms into the C-6 and C-8 positions of the octanoyl moiety bound to the lipoyl domains of lipoate-dependent enzymes, thereby converting the octanoylated domains into lipoylated derivatives. The sequence is that of Lipoyl synthase from Geobacillus thermodenitrificans (strain NG80-2).